The sequence spans 290 residues: Lipoyl synthase (290 aa).

[4Fe-4S] cluster is bound by residues Cys44, Cys49, Cys55, Cys70, Cys74, Cys77, and Ser282. The Radical SAM core domain maps to 56-271 (WGEGTATFMI…ELLGKEMGFR (216 aa)).

This sequence belongs to the radical SAM superfamily. Lipoyl synthase family. The cofactor is [4Fe-4S] cluster.

Its subcellular location is the cytoplasm. It carries out the reaction [[Fe-S] cluster scaffold protein carrying a second [4Fe-4S](2+) cluster] + N(6)-octanoyl-L-lysyl-[protein] + 2 oxidized [2Fe-2S]-[ferredoxin] + 2 S-adenosyl-L-methionine + 4 H(+) = [[Fe-S] cluster scaffold protein] + N(6)-[(R)-dihydrolipoyl]-L-lysyl-[protein] + 4 Fe(3+) + 2 hydrogen sulfide + 2 5'-deoxyadenosine + 2 L-methionine + 2 reduced [2Fe-2S]-[ferredoxin]. Its pathway is protein modification; protein lipoylation via endogenous pathway; protein N(6)-(lipoyl)lysine from octanoyl-[acyl-carrier-protein]: step 2/2. Functionally, catalyzes the radical-mediated insertion of two sulfur atoms into the C-6 and C-8 positions of the octanoyl moiety bound to the lipoyl domains of lipoate-dependent enzymes, thereby converting the octanoylated domains into lipoylated derivatives. This is Lipoyl synthase from Flavobacterium psychrophilum (strain ATCC 49511 / DSM 21280 / CIP 103535 / JIP02/86).